The following is a 468-amino-acid chain: Uronate isomerase (468 aa).

It belongs to the metallo-dependent hydrolases superfamily. Uronate isomerase family.

It carries out the reaction D-glucuronate = D-fructuronate. It catalyses the reaction aldehydo-D-galacturonate = keto-D-tagaturonate. It participates in carbohydrate metabolism; pentose and glucuronate interconversion. The chain is Uronate isomerase from Bacteroides fragilis (strain ATCC 25285 / DSM 2151 / CCUG 4856 / JCM 11019 / LMG 10263 / NCTC 9343 / Onslow / VPI 2553 / EN-2).